The sequence spans 393 residues: tRNA(Met) cytidine acetate ligase (393 aa).

ATP is bound by residues glycine 81, asparagine 142, and arginine 167.

The protein belongs to the TmcAL family.

Its subcellular location is the cytoplasm. The catalysed reaction is cytidine(34) in elongator tRNA(Met) + acetate + ATP = N(4)-acetylcytidine(34) in elongator tRNA(Met) + AMP + diphosphate. Its function is as follows. Catalyzes the formation of N(4)-acetylcytidine (ac(4)C) at the wobble position of elongator tRNA(Met), using acetate and ATP as substrates. First activates an acetate ion to form acetyladenylate (Ac-AMP) and then transfers the acetyl group to tRNA to form ac(4)C34. The sequence is that of tRNA(Met) cytidine acetate ligase from Bacillus cereus (strain AH820).